Reading from the N-terminus, the 574-residue chain is Sulfate adenylyltransferase (574 aa).

Residues 1–169 (MSNPPHGGVL…VEAINKLNHY (169 aa)) form an N-terminal region. The segment at 170–394 (DYVALRYTPA…LRESSRPRST (225 aa)) is catalytic. Sulfate is bound at residue glutamine 197. ATP contacts are provided by residues 197–200 (QTRN) and 291–294 (GRDH). Catalysis depends on residues threonine 198, arginine 199, and asparagine 200. Residue arginine 199 participates in sulfate binding. Alanine 295 lines the sulfate pocket. Residue valine 333 participates in ATP binding. The segment at 395–574 (QGFTIFLTGY…LETEGFFDRA (180 aa)) is allosteric regulation domain; adenylyl-sulfate kinase-like. Residues 434-437 (DTVR), arginine 451, 477-478 (IA), and arginine 516 contribute to the 3'-phosphoadenylyl sulfate site.

In the N-terminal section; belongs to the sulfate adenylyltransferase family. This sequence in the C-terminal section; belongs to the APS kinase family. Homohexamer. Dimer of trimers.

Its subcellular location is the cytoplasm. It catalyses the reaction sulfate + ATP + H(+) = adenosine 5'-phosphosulfate + diphosphate. The protein operates within sulfur metabolism; hydrogen sulfide biosynthesis; sulfite from sulfate: step 1/3. Allosterically inhibited by 3'-phosphoadenosine 5'-phosphosulfate (PAPS). Functionally, catalyzes the first intracellular reaction of sulfate assimilation, forming adenosine-5'-phosphosulfate (APS) from inorganic sulfate and ATP. Plays an important role in sulfate activation as a component of the biosynthesis pathway of sulfur-containing amino acids. The chain is Sulfate adenylyltransferase from Aspergillus clavatus (strain ATCC 1007 / CBS 513.65 / DSM 816 / NCTC 3887 / NRRL 1 / QM 1276 / 107).